Here is a 291-residue protein sequence, read N- to C-terminus: 6-deoxy-6-sulfogluconolactonase (291 aa).

Residues Glu-17, Asn-148, and Asp-198 each coordinate a divalent metal cation. The active-site Proton donor/acceptor is the Asp-198.

The protein belongs to the SMP-30/CGR1 family. A divalent metal cation serves as cofactor.

The enzyme catalyses 6-deoxy-6-sulfo-D-glucono-1,5-lactone + H2O = 6-deoxy-6-sulfo-D-gluconate + H(+). Catalyzes the hydrolysis of 6-deoxy-6-sulfo-D-glucono-1,5-lactone to form 6-deoxy-6-sulfo-D-gluconate. Is involved in a degradation pathway of sulfoquinovose (SQ) that allows P.putida SQ1 to use SQ as the sole carbon and energy source for growth. The protein is 6-deoxy-6-sulfogluconolactonase of Pseudomonas putida (Arthrobacter siderocapsulatus).